Here is a 244-residue protein sequence, read N- to C-terminus: E3 ubiquitin-protein ligase RNF166 (244 aa).

The interval 10 to 30 (AQRPQAPGPGPPRPPPPAGPA) is disordered. Residues 15-28 (APGPGPPRPPPPAG) are compositionally biased toward pro residues. The segment at 40 to 80 (CPICLEVFHRAVGIAGCGHTFCGECLQPCLQVPSPLCPLCR) adopts an RING-type zinc-finger fold. Zn(2+) is bound by residues C105, C108, H120, and C124. The C2HC RNF-type zinc finger occupies 105–124 (CRGCSKKVTLAKMRSHVSSC). One can recognise a UIM domain in the interval 228 to 244 (DEEAALQAALALSLSEN).

The protein resides in the cytoplasm. The catalysed reaction is S-ubiquitinyl-[E2 ubiquitin-conjugating enzyme]-L-cysteine + [acceptor protein]-L-lysine = [E2 ubiquitin-conjugating enzyme]-L-cysteine + N(6)-ubiquitinyl-[acceptor protein]-L-lysine.. It participates in protein modification; protein ubiquitination. Functionally, E3 ubiquitin-protein ligase that promotes the ubiquitination of different substrates. This chain is E3 ubiquitin-protein ligase RNF166 (RNF166), found in Gallus gallus (Chicken).